A 437-amino-acid polypeptide reads, in one-letter code: MRVPTHIIVAASAWGSRLVSIFIQFYSIKILLDLLGTEGYAVFTVIGSLVGWFLLADFGLGNSLQNQISYRRANHQEYQDLVLSAVIAIIPIFILFIILILTLSPYISEFLLGGFDFLNNNQRSNIFKVASFIFLTTSIGNLAYKIWFSEHKGWVSNIIPALSSIVGLVFLMRLPSDGSNISEDIIFSIYCFYIPAAFFGVISTLFKVIPYLKCKNFLNKLTLYTLIKNGGGFFLFSVLSALVLQVDYIVMSQTLVERDLVTYNIMSKTFGLINFIYAALLQSLWPVCAEASSKLRFDNFYKIEKKYISFGFIIVIASSFVIFLLKDFIVNILAPGKDFYFPISLIILFSFYQVVRVWTDTYAMFLMSIGKLKPLWISVPFQAVLSGSLQWVGAVNYGLVGLLCGLIASFLITVSWWLPFSFRSTVDRIVKDKRLDE.

Helical transmembrane passes span 3–23, 41–61, 81–101, 129–149, 152–172, 185–205, 231–251, 269–289, 310–330, 332–352, 375–395, and 398–418; these read VPTHIIVAASAWGSRLVSIFI, AVFTVIGSLVGWFLLADFGLG, LVLSAVIAIIPIFILFIILIL, VASFIFLTTSIGNLAYKIWFS, KGWVSNIIPALSSIVGLVFLM, IIFSIYCFYIPAAFFGVISTL, GGFFLFSVLSALVLQVDYIVM, TFGLINFIYAALLQSLWPVCA, FGFIIVIASSFVIFLLKDFIV, ILAPGKDFYFPISLIILFSFY, LWISVPFQAVLSGSLQWVGAV, and GLVGLLCGLIASFLITVSWWL.

Its subcellular location is the cell inner membrane. It participates in bacterial outer membrane biogenesis; LPS O-antigen biosynthesis. May be involved in the translocation process of the nascent O-polysaccharide molecules and/or its ligation to lipid A core units. In Yersinia pseudotuberculosis, this protein is Putative O-antigen export protein (rfbX).